The chain runs to 381 residues: Pentatricopeptide repeat-containing protein 2, mitochondrial (381 aa).

One copy of the PPR repeat lies at 159-193 (TSFNILMDMLFTKGKYERALQVLIEMKNQDVRFSK). Phosphoserine is present on Ser375.

This sequence belongs to the PTCD2 family. In terms of tissue distribution, high expression in heart and liver and low expression in kidney, brain and testis.

It is found in the mitochondrion. Its function is as follows. Involved in mitochondrial RNA maturation and mitochondrial respiratory chain function. This is Pentatricopeptide repeat-containing protein 2, mitochondrial (Ptcd2) from Mus musculus (Mouse).